The sequence spans 221 residues: Urease accessory protein UreG (221 aa).

GTP is bound at residue 19–26; that stretch reads GPVGSGKT.

This sequence belongs to the SIMIBI class G3E GTPase family. UreG subfamily. As to quaternary structure, homodimer. UreD, UreF and UreG form a complex that acts as a GTP-hydrolysis-dependent molecular chaperone, activating the urease apoprotein by helping to assemble the nickel containing metallocenter of UreC. The UreE protein probably delivers the nickel.

It localises to the cytoplasm. In terms of biological role, facilitates the functional incorporation of the urease nickel metallocenter. This process requires GTP hydrolysis, probably effectuated by UreG. This chain is Urease accessory protein UreG, found in Yersinia enterocolitica serotype O:8 / biotype 1B (strain NCTC 13174 / 8081).